A 470-amino-acid polypeptide reads, in one-letter code: Metalloreductase STEAP4 (470 aa).

NADP(+) is bound by residues 27 to 30 (TGDF), 49 to 50 (SR), tyrosine 67, 81 to 85 (MHREH), asparagine 106, and alanine 139. Tryptophan 140 and aspartate 148 together coordinate FAD. Residue arginine 171 participates in NADP(+) binding. Helical transmembrane passes span 202–224 (FPFY…REVI) and 236–256 (YRLA…ILLA). Tyrosine 217 contacts Fe(3+). The Ferric oxidoreductase domain maps to 247-395 (FPITALILLA…LGYLTLVLCT (149 aa)). The FAD site is built by glutamine 269 and arginine 290. The next 2 helical transmembrane spans lie at 293-313 (LGLV…VIPI) and 342-362 (AWIN…FLLL). Histidine 304 contacts heme b. Tyrosine 307 contributes to the Fe(3+) binding site. Residues serine 366 and glutamine 383 each contribute to the FAD site. Helical transmembrane passes span 381 to 401 (FVQS…TLVY) and 419 to 439 (AYIL…ILIM). Histidine 397 lines the heme b pocket.

Belongs to the STEAP family. In terms of assembly, homotrimer. Interacts with PTK2/FAK1; the interaction may regulate PTK2 phosphorylation. FAD is required as a cofactor. It depends on heme b as a cofactor. As to expression, expressed in white and brown adipose tissues cells, as well as in muscle and liver cells. Detected in joints and spleens of arthritic mice.

The protein resides in the cell membrane. The protein localises to the golgi apparatus membrane. It localises to the early endosome membrane. The catalysed reaction is 2 Fe(2+) + NADP(+) + H(+) = 2 Fe(3+) + NADPH. It catalyses the reaction 2 Cu(+) + NADP(+) + H(+) = 2 Cu(2+) + NADPH. Functionally, integral membrane protein that functions as a NADPH-dependent ferric-chelate reductase, using NADPH from one side of the membrane to reduce a Fe(3+) chelate that is bound on the other side of the membrane. Mediates sequential transmembrane electron transfer from NADPH to FAD and onto heme, and finally to the Fe(3+) chelate. Can also reduce Cu(2+) to Cu(1+). Plays a role in systemic metabolic homeostasis, integrating inflammatory and metabolic responses. Associated with obesity and insulin-resistance. Involved in inflammatory arthritis, through the regulation of inflammatory cytokines. Inhibits anchorage-independent cell proliferation. The sequence is that of Metalloreductase STEAP4 (Steap4) from Mus musculus (Mouse).